Consider the following 331-residue polypeptide: L-lactate dehydrogenase A chain (331 aa).

Residues 29–57 and arginine 98 contribute to the NAD(+) site; that span reads GMVG…MEDK. Residues arginine 105, asparagine 137, and arginine 168 each contribute to the substrate site. Position 137 (asparagine 137) interacts with NAD(+). The active-site Proton acceptor is histidine 192. Threonine 247 serves as a coordination point for substrate.

Belongs to the LDH/MDH superfamily. LDH family. In terms of assembly, homotetramer.

Its subcellular location is the cytoplasm. The enzyme catalyses (S)-lactate + NAD(+) = pyruvate + NADH + H(+). It participates in fermentation; pyruvate fermentation to lactate; (S)-lactate from pyruvate: step 1/1. Interconverts simultaneously and stereospecifically pyruvate and lactate with concomitant interconversion of NADH and NAD(+). In Notothenia neglecta (Yellowbelly rockcod), this protein is L-lactate dehydrogenase A chain (ldha).